The sequence spans 307 residues: GTPase Era (307 aa).

Residues His14–Glu184 enclose the Era-type G domain. Residues Gly22 to Ser29 are G1. Residue Gly22–Ser29 participates in GTP binding. The interval Gln48–Arg52 is G2. The segment at Asp69–Gly72 is G3. GTP is bound by residues Asp69 to Leu73 and Asn131 to Asp134. Positions Asn131 to Asp134 are G4. Residues Leu162 to Ala164 form a G5 region. The 78-residue stretch at Leu215–Pro292 folds into the KH type-2 domain.

Belongs to the TRAFAC class TrmE-Era-EngA-EngB-Septin-like GTPase superfamily. Era GTPase family. As to quaternary structure, monomer.

It is found in the cytoplasm. The protein resides in the cell membrane. Its function is as follows. An essential GTPase that binds both GDP and GTP, with rapid nucleotide exchange. Plays a role in 16S rRNA processing and 30S ribosomal subunit biogenesis and possibly also in cell cycle regulation and energy metabolism. The sequence is that of GTPase Era from Deinococcus deserti (strain DSM 17065 / CIP 109153 / LMG 22923 / VCD115).